A 405-amino-acid chain; its full sequence is L-rhamnonate dehydratase (405 aa).

Positions 33 and 59 each coordinate substrate. Mg(2+)-binding residues include D226, E252, and E280. The active-site Proton acceptor is the H329. E349 is a binding site for substrate.

It belongs to the mandelate racemase/muconate lactonizing enzyme family. RhamD subfamily. As to quaternary structure, homooctamer; tetramer of dimers. Requires Mg(2+) as cofactor.

It catalyses the reaction L-rhamnonate = 2-dehydro-3-deoxy-L-rhamnonate + H2O. Its function is as follows. Catalyzes the dehydration of L-rhamnonate to 2-keto-3-deoxy-L-rhamnonate (KDR). This chain is L-rhamnonate dehydratase, found in Escherichia coli O6:H1 (strain CFT073 / ATCC 700928 / UPEC).